Here is an 82-residue protein sequence, read N- to C-terminus: 4-(gamma-L-glutamylamino)butanoyl-[BtrI acyl-carrier protein] monooxygenase BtrO (82 aa).

In terms of assembly, homotetramer.

It catalyses the reaction 4-(gamma-L-glutamylamino)butanoyl-[BtrI ACP] + FMNH2 + O2 = 4-(gamma-L-glutamylamino)-(2S)-2-hydroxybutanoyl-[BtrI ACP] + FMN + H2O + H(+). Its pathway is antibiotic biosynthesis; butirosin biosynthesis. Its function is as follows. NAD(P)H:FMN oxidoreductase component of a two-component system involved in the biosynthesis of the side chain of the aminoglycoside antibiotics in the biosynthetic pathway of butirosin. Together with BtrO, mediates hydroxylation of gamma-L-Glu-GABA-S-BtrI. This chain is 4-(gamma-L-glutamylamino)butanoyl-[BtrI acyl-carrier protein] monooxygenase BtrO (btrV), found in Niallia circulans (Bacillus circulans).